Consider the following 399-residue polypeptide: Tryptophan synthase beta chain (399 aa).

The residue at position 86 (K86) is an N6-(pyridoxal phosphate)lysine.

Belongs to the TrpB family. In terms of assembly, tetramer of two alpha and two beta chains. Pyridoxal 5'-phosphate is required as a cofactor.

The catalysed reaction is (1S,2R)-1-C-(indol-3-yl)glycerol 3-phosphate + L-serine = D-glyceraldehyde 3-phosphate + L-tryptophan + H2O. It functions in the pathway amino-acid biosynthesis; L-tryptophan biosynthesis; L-tryptophan from chorismate: step 5/5. Functionally, the beta subunit is responsible for the synthesis of L-tryptophan from indole and L-serine. This chain is Tryptophan synthase beta chain (trpB), found in Buchnera aphidicola subsp. Schizaphis graminum (strain Sg).